The following is a 298-amino-acid chain: MKKSFLIMTDSSTTLDREWAKNNDVMILPLSILRSDHTLIVDDGIESKPERIYEDIDNGYTFQTSCTPYGVLIEAIEQKLQEYEKIIFIGISSGFSSQFNNAKNLEKEYQDKLFVVDTEDFGYSLEHLVYKIKAMLSNNISFGDILKMINKHHDYTSSFLACENITGLVRSGRIPKIIGTMLKLSKVTPIIKAEWKNHRAGMALNIRSAPHKILENINHVFDNQLNNHTIEKVCILQAGLSSERIDELKNDVINHFHVDKEKIVIRSGPPIFLVYVWKGALGIQVIANIPKKHVEKKH.

The DegV domain occupies 5-287 (FLIMTDSSTT…KGALGIQVIA (283 aa)). Hexadecanoate-binding residues include Ser-65 and Ser-96.

Functionally, may bind long-chain fatty acids, such as palmitate, and may play a role in lipid transport or fatty acid metabolism. In Ureaplasma parvum serovar 3 (strain ATCC 700970), this protein is DegV domain-containing protein UU535.